Reading from the N-terminus, the 101-residue chain is uncharacterized protein (101 aa).

Residues 13–33 (FISIMCLFSIPLCFSLSIFFF) traverse the membrane as a helical segment.

It is found in the membrane. This is an uncharacterized protein from Schizosaccharomyces pombe (strain 972 / ATCC 24843) (Fission yeast).